A 510-amino-acid chain; its full sequence is ATP synthase subunit alpha (510 aa).

Position 169–176 (169–176) interacts with ATP; it reads GDRQTGKT.

It belongs to the ATPase alpha/beta chains family. F-type ATPases have 2 components, CF(1) - the catalytic core - and CF(0) - the membrane proton channel. CF(1) has five subunits: alpha(3), beta(3), gamma(1), delta(1), epsilon(1). CF(0) has three main subunits: a(1), b(2) and c(9-12). The alpha and beta chains form an alternating ring which encloses part of the gamma chain. CF(1) is attached to CF(0) by a central stalk formed by the gamma and epsilon chains, while a peripheral stalk is formed by the delta and b chains.

It is found in the cell inner membrane. The enzyme catalyses ATP + H2O + 4 H(+)(in) = ADP + phosphate + 5 H(+)(out). In terms of biological role, produces ATP from ADP in the presence of a proton gradient across the membrane. The alpha chain is a regulatory subunit. The polypeptide is ATP synthase subunit alpha (Rickettsia conorii (strain ATCC VR-613 / Malish 7)).